A 67-amino-acid chain; its full sequence is MKLTSLFIFVIVALSLLFSSTDAAPGKIPVKAIKQAGKVIGKGLRAINIAGTTHDVVSFFRPKKKKH.

Positions 1 to 23 (MKLTSLFIFVIVALSLLFSSTDA) are cleaved as a signal peptide.

The protein belongs to the moricin family. Monomer.

It is found in the secreted. Its function is as follows. Antimicrobial peptide. Active against a broad spectrum of Gram-positive and Gram-negative bacteria including methicillin-resistant S.aureus ATCC 43 300, S.aureus BAA-39, pathogenic strains of L.monocytogenes, K.pneumoniae, E.coli O157:H7, S.typhimurium and multidrug-resistant S.typhimurium DT104 with minimum inhibitory concentration (MIC) of 1.4 uM for all except for S.aureus BAA-39. Also active against Serratia marcescens. Probably acts by disturbing membrane functions with its amphipathic alpha-helical structure. May protect a developing embryo from bacterial infection. The chain is Moricin from Manduca sexta (Tobacco hawkmoth).